The chain runs to 446 residues: Deoxyguanosinetriphosphate triphosphohydrolase-like protein (446 aa).

The segment at 1 to 28 is disordered; it reads MSSSVWQERRHGEDKQRRNDHRSPFQRD. Residues 7–28 are compositionally biased toward basic and acidic residues; sequence QERRHGEDKQRRNDHRSPFQRD. The HD domain maps to 59-252; that stretch reads RLTHSLEVSQ…MELADDIAYA (194 aa).

The protein belongs to the dGTPase family. Type 2 subfamily.

In Shewanella sp. (strain MR-4), this protein is Deoxyguanosinetriphosphate triphosphohydrolase-like protein.